We begin with the raw amino-acid sequence, 231 residues long: Uridylate cyclase (231 aa).

The 133-residue stretch at 46–178 (TVLYADLDGS…RAANYAAKLT (133 aa)) folds into the Guanylate cyclase domain. Tyr-49 contributes to the a ribonucleoside 5'-triphosphate binding site. Mn(2+) is bound by residues Asp-51 and Asp-95. Arg-96 contacts a ribonucleoside 5'-triphosphate.

Belongs to the adenylyl cyclase class-4/guanylyl cyclase family. Pyrimidine cyclase subfamily. As to quaternary structure, homodimer. The cofactor is Mn(2+).

The protein localises to the cytoplasm. The catalysed reaction is UTP = 3',5'-cyclic UMP + diphosphate. In terms of biological role, pycsar (pyrimidine cyclase system for antiphage resistance) provides immunity against bacteriophage. The pyrimidine cyclase (PycC) synthesizes cyclic nucleotides in response to infection; these serve as specific second messenger signals. The signal activates the adjacent effector, leading to bacterial cell death and abortive phage infection. A clade B Pycsar system. Its function is as follows. The pyrimidine cyclase gene of a two-gene Pycsar system, generates cyclic UMP (cUMP) from UTP probably in response to bacteriophage infection. Expression of this and adjacent effector XpPycTIR (AC P0DV29) confers resistance to bacteriophage T7. When cells expressing the Pycsar system are infected phage T7 at low multiplicity of infection (0.2 MOI) the culture survives, at 2.0 MOI bacteria enter growth arrest. The same cells enter growth arrest after exposure to 2.5 mM cUMP but not cCMP; the effector protein responds only to the cUMP produced by its cognate NTP cyclase. In Xanthomonas perforans, this protein is Uridylate cyclase.